Reading from the N-terminus, the 129-residue chain is Trefoil factor 2 (129 aa).

Positions 1-23 (MGPRGAPLLAVVLVLGLHALVEG) are cleaved as a signal peptide. P-type domains are found at residues 29–73 (CRCS…FHPL) and 79–122 (EQCV…FFPQ). Cystine bridges form between cysteine 29/cysteine 127, cysteine 31/cysteine 58, cysteine 42/cysteine 57, cysteine 52/cysteine 69, cysteine 81/cysteine 107, cysteine 91/cysteine 106, and cysteine 101/cysteine 118.

In terms of tissue distribution, stomach and pancreas.

It is found in the secreted. Inhibits gastrointestinal motility and gastric acid secretion. Could function as a structural component of gastric mucus, possibly by stabilizing glycoproteins in the mucus gel through interactions with carbohydrate side chains. The chain is Trefoil factor 2 (Tff2) from Mus musculus (Mouse).